A 98-amino-acid chain; its full sequence is Citrate lyase acyl carrier protein (98 aa).

The residue at position 14 (Ser-14) is an O-(phosphoribosyl dephospho-coenzyme A)serine.

This sequence belongs to the CitD family. Oligomer with a subunit composition of (alpha,beta,gamma)6.

The protein localises to the cytoplasm. Covalent carrier of the coenzyme of citrate lyase. This Vibrio cholerae serotype O1 (strain ATCC 39541 / Classical Ogawa 395 / O395) protein is Citrate lyase acyl carrier protein.